Reading from the N-terminus, the 228-residue chain is Ribosomal RNA small subunit methyltransferase G (228 aa).

S-adenosyl-L-methionine contacts are provided by residues G70, A121 to E122, and R138.

This sequence belongs to the methyltransferase superfamily. RNA methyltransferase RsmG family.

It localises to the cytoplasm. Its function is as follows. Specifically methylates the N7 position of a guanine in 16S rRNA. This Thermotoga petrophila (strain ATCC BAA-488 / DSM 13995 / JCM 10881 / RKU-1) protein is Ribosomal RNA small subunit methyltransferase G.